A 232-amino-acid polypeptide reads, in one-letter code: RNA chaperone ProQ (232 aa).

A disordered region spans residues 105 to 182; sequence EAKARVQAQR…REEQHTPVSD (78 aa). Residues 117-136 show a composition bias toward basic and acidic residues; that stretch reads QQAKKREAAAAAGEKEDAPR. The span at 137–146 shows a compositional bias: basic residues; the sequence is RERKPRPTTP. Positions 147-177 are enriched in basic and acidic residues; the sequence is RRKEGAERKPRAQKPVEKAPKTVKAPREEQH.

Belongs to the ProQ family.

It is found in the cytoplasm. Its function is as follows. RNA chaperone with significant RNA binding, RNA strand exchange and RNA duplexing activities. May regulate ProP activity through an RNA-based, post-transcriptional mechanism. In Shigella flexneri serotype 5b (strain 8401), this protein is RNA chaperone ProQ.